The sequence spans 407 residues: Peptidase T (407 aa).

A Zn(2+)-binding site is contributed by histidine 82. Aspartate 84 is an active-site residue. Aspartate 143 is a binding site for Zn(2+). Glutamate 177 acts as the Proton acceptor in catalysis. Zn(2+) contacts are provided by glutamate 178, aspartate 200, and histidine 382.

Belongs to the peptidase M20B family. The cofactor is Zn(2+).

Its subcellular location is the cytoplasm. It catalyses the reaction Release of the N-terminal residue from a tripeptide.. Cleaves the N-terminal amino acid of tripeptides. The sequence is that of Peptidase T from Streptococcus thermophilus (strain ATCC BAA-491 / LMD-9).